The primary structure comprises 236 residues: Snake venom serine protease pallase (236 aa).

A Peptidase S1 domain is found at 1–227 (VIGGDECNIN…HLDWIENIIA (227 aa)). Intrachain disulfides connect cysteine 7/cysteine 139, cysteine 26/cysteine 42, cysteine 74/cysteine 234, cysteine 118/cysteine 188, cysteine 150/cysteine 167, and cysteine 178/cysteine 203. Active-site charge relay system residues include histidine 41 and aspartate 86. The active-site Charge relay system is the serine 182.

This sequence belongs to the peptidase S1 family. Snake venom subfamily. Monomer. In terms of tissue distribution, expressed by the venom gland.

It is found in the secreted. In terms of biological role, snake venom serine protease that may act in the hemostasis system of the prey. The chain is Snake venom serine protease pallase from Gloydius halys (Chinese water mocassin).